The primary structure comprises 160 residues: Large ribosomal subunit protein uL15 (160 aa).

Residues 1–13 (MKLNEIRDNEGAR) are compositionally biased toward basic and acidic residues. Residues 1 to 41 (MKLNEIRDNEGARKSRIRVGRGIGSGKGKTGGRGVKGQKSR) form a disordered region. Residues 21–35 (RGIGSGKGKTGGRGV) are compositionally biased toward gly residues.

This sequence belongs to the universal ribosomal protein uL15 family. Part of the 50S ribosomal subunit.

Functionally, binds to the 23S rRNA. This chain is Large ribosomal subunit protein uL15, found in Parvibaculum lavamentivorans (strain DS-1 / DSM 13023 / NCIMB 13966).